A 62-amino-acid polypeptide reads, in one-letter code: Small ribosomal subunit protein bS21 (62 aa).

The protein belongs to the bacterial ribosomal protein bS21 family.

In Mycoplasma genitalium (strain ATCC 33530 / DSM 19775 / NCTC 10195 / G37) (Mycoplasmoides genitalium), this protein is Small ribosomal subunit protein bS21 (rpsU).